We begin with the raw amino-acid sequence, 736 residues long: Sulfate transporter (736 aa).

The tract at residues 1 to 28 (MSSESKEPHVLSPKDSFEGNDRYSPPSR) is disordered. Residues Ser-12 and Ser-16 each carry the phosphoserine modification. A run of 2 helical transmembrane segments spans residues 114–134 (VMSGLIVGILLVPQSIAYSLL) and 139–159 (PIYGLYTSFFASLIYFLLGTS). Residues Asn-201 and Asn-207 are each glycosylated (N-linked (GlcNAc...) asparagine). The next 6 membrane-spanning stretches (helical) occupy residues 229 to 249 (FLAGIYQVAMGFFQVGFVSVY), 257 to 277 (GFVTGASFTILTSQAKYLLGL), 380 to 400 (LIPSVAVDAIAISIIGFAITV), 422 to 442 (AIGFCNIIPSFFHCFTTSAAL), 457 to 477 (LSGVMTALVLLLVLLVIAPLF), and 526 to 546 (LISTELGLLIGVCFSMFCVIL). The STAS domain maps to 570-721 (AYKNLQARPG…YSVYEAMAFA (152 aa)).

It belongs to the SLC26A/SulP transporter (TC 2.A.53) family. Post-translationally, N-glycosylated.

The protein resides in the cell membrane. It is found in the apical cell membrane. The catalysed reaction is oxalate(in) + sulfate(out) = oxalate(out) + sulfate(in). The enzyme catalyses sulfate(out) + 2 chloride(in) = sulfate(in) + 2 chloride(out). It catalyses the reaction oxalate(out) + 2 chloride(in) = oxalate(in) + 2 chloride(out). It carries out the reaction bromide(in) + chloride(out) = bromide(out) + chloride(in). The catalysed reaction is nitrate(in) + chloride(out) = nitrate(out) + chloride(in). The enzyme catalyses iodide(in) + chloride(out) = iodide(out) + chloride(in). Sulfate transporter which mediates sulfate uptake into chondrocytes in order to maintain adequate sulfation of proteoglycans which is needed for cartilage development. Mediates electroneutral anion exchange of sulfate ions for oxalate ions, sulfate and oxalate ions for chloride and/or hydroxyl ions and chloride ions for bromide, iodide and nitrate ions. The coupling of sulfate transport to both hydroxyl and chloride ions likely serves to ensure transport at both acidic pH when most sulfate uptake is mediated by sulfate-hydroxide exchange and alkaline pH when most sulfate uptake is mediated by sulfate-chloride exchange. Essential for chondrocyte proliferation, differentiation and cell size expansion. The chain is Sulfate transporter (SLC26A2) from Equus caballus (Horse).